Consider the following 355-residue polypeptide: Protein RecA (355 aa).

65-72 is an ATP binding site; sequence GPESSGKT.

It belongs to the RecA family.

The protein localises to the cytoplasm. In terms of biological role, can catalyze the hydrolysis of ATP in the presence of single-stranded DNA, the ATP-dependent uptake of single-stranded DNA by duplex DNA, and the ATP-dependent hybridization of homologous single-stranded DNAs. It interacts with LexA causing its activation and leading to its autocatalytic cleavage. This Pseudomonas putida (Arthrobacter siderocapsulatus) protein is Protein RecA.